We begin with the raw amino-acid sequence, 132 residues long: uncharacterized protein (132 aa).

To M.jannaschii MJ0661.

This is an uncharacterized protein from Helicobacter pylori (strain J99 / ATCC 700824) (Campylobacter pylori J99).